The sequence spans 149 residues: Large ribosomal subunit protein uL13 (149 aa).

It belongs to the universal ribosomal protein uL13 family. Part of the 50S ribosomal subunit.

Its function is as follows. This protein is one of the early assembly proteins of the 50S ribosomal subunit, although it is not seen to bind rRNA by itself. It is important during the early stages of 50S assembly. In Gemmatimonas aurantiaca (strain DSM 14586 / JCM 11422 / NBRC 100505 / T-27), this protein is Large ribosomal subunit protein uL13.